We begin with the raw amino-acid sequence, 362 residues long: Dual-specificity RNA methyltransferase RlmN (362 aa).

Glutamate 91 acts as the Proton acceptor in catalysis. The 237-residue stretch at 97-333 (EDDRGTLCVS…VTTRKTRGED (237 aa)) folds into the Radical SAM core domain. Cysteine 104 and cysteine 338 form a disulfide bridge. Residues cysteine 111, cysteine 115, and cysteine 118 each contribute to the [4Fe-4S] cluster site. S-adenosyl-L-methionine contacts are provided by residues 164–165 (GE), serine 196, 218–220 (SLH), and asparagine 295. The S-methylcysteine intermediate role is filled by cysteine 338.

Belongs to the radical SAM superfamily. RlmN family. It depends on [4Fe-4S] cluster as a cofactor.

The protein resides in the cytoplasm. The enzyme catalyses adenosine(2503) in 23S rRNA + 2 reduced [2Fe-2S]-[ferredoxin] + 2 S-adenosyl-L-methionine = 2-methyladenosine(2503) in 23S rRNA + 5'-deoxyadenosine + L-methionine + 2 oxidized [2Fe-2S]-[ferredoxin] + S-adenosyl-L-homocysteine. It carries out the reaction adenosine(37) in tRNA + 2 reduced [2Fe-2S]-[ferredoxin] + 2 S-adenosyl-L-methionine = 2-methyladenosine(37) in tRNA + 5'-deoxyadenosine + L-methionine + 2 oxidized [2Fe-2S]-[ferredoxin] + S-adenosyl-L-homocysteine. In terms of biological role, specifically methylates position 2 of adenine 2503 in 23S rRNA and position 2 of adenine 37 in tRNAs. m2A2503 modification seems to play a crucial role in the proofreading step occurring at the peptidyl transferase center and thus would serve to optimize ribosomal fidelity. This is Dual-specificity RNA methyltransferase RlmN from Methylobacillus flagellatus (strain ATCC 51484 / DSM 6875 / VKM B-1610 / KT).